A 118-amino-acid chain; its full sequence is Ribosome-binding factor A (118 aa).

The protein belongs to the RbfA family. In terms of assembly, monomer. Binds 30S ribosomal subunits, but not 50S ribosomal subunits or 70S ribosomes.

The protein localises to the cytoplasm. Its function is as follows. One of several proteins that assist in the late maturation steps of the functional core of the 30S ribosomal subunit. Associates with free 30S ribosomal subunits (but not with 30S subunits that are part of 70S ribosomes or polysomes). Required for efficient processing of 16S rRNA. May interact with the 5'-terminal helix region of 16S rRNA. This chain is Ribosome-binding factor A, found in Bacillus anthracis (strain A0248).